The chain runs to 349 residues: Oxygen-dependent coproporphyrinogen-III oxidase (349 aa).

Disordered regions lie at residues 1–21 (MGAS…KRAR) and 37–60 (SLDG…GRSK). Substrate is bound at residue serine 105. Residues histidine 109 and histidine 119 each coordinate a divalent metal cation. The Proton donor role is filled by histidine 119. 121–123 (NYR) provides a ligand contact to substrate. Residues histidine 153 and histidine 183 each coordinate a divalent metal cation. Residues 273–308 (YAEFNLVWDRGTIFGLQTNGRTESILMSLPPLARWE) form an important for dimerization region.

This sequence belongs to the aerobic coproporphyrinogen-III oxidase family. In terms of assembly, homodimer. It depends on a divalent metal cation as a cofactor.

The protein localises to the cytoplasm. It catalyses the reaction coproporphyrinogen III + O2 + 2 H(+) = protoporphyrinogen IX + 2 CO2 + 2 H2O. It functions in the pathway porphyrin-containing compound metabolism; protoporphyrin-IX biosynthesis; protoporphyrinogen-IX from coproporphyrinogen-III (O2 route): step 1/1. Involved in the heme and chlorophyll biosynthesis. Catalyzes the aerobic oxidative decarboxylation of propionate groups of rings A and B of coproporphyrinogen-III to yield the vinyl groups in protoporphyrinogen-IX. The sequence is that of Oxygen-dependent coproporphyrinogen-III oxidase from Prochlorococcus marinus (strain MIT 9313).